A 640-amino-acid chain; its full sequence is MASVTSYPLLEQIDSPERLRRLPESDLETLAEELRDFLLHSVARSGGHLAAGLGTIELTIALHYIFATPEDRLVWDVGHQAYPHKVLTGRRERLGTIRQAGGLAPFPSRHESPYDTFGVGHSSTSISAALGMAIAANEKGEKRKTVAIIGDGGMTAGMAYEALDHAGALGADLLVILNDNEMSISPNVGAISSYLTRLLSGRVYSTVREGSKKVLERMPPPMWELARRTEEHVKGMVAPGTLFEEMGFNYFGPIDGHDLSSLIRTLRNLHKLTGPRLLHIVTCKGKGYTLAEENPVTYHGVTPFDPKVGIQQGPQKPSSAMSYTQVFSQWLCDMAAQDGLLVGITPAMREGSGLVKFSECFPERYFDVAIAEQHSVTLAAGMACDGLKPVVAIYSTFLQRAYDQLIHDVALQNLPVLFAIDRAGVVGPDGPTHAGSFDLTYLRCIPNLVVMAPADENECRQMLYTGFLLNQPAAVRYPRGKGPGVAVEASMTALPLGKAELKRKGRGIAILAFGATVAPALEAAEKLDATVVNMRFVKPLDEDLVLEMAMNHELLVTVEDNVIAGGAGSAVSECLAYHGVSVPLLLHGLPDNFLEHGSREALLEQCHLNAEGILQRVKTYRARLPKSKASVVSSAAGTHG.

Thiamine diphosphate is bound by residues His-79 and 120–122 (GHS). Asp-151 provides a ligand contact to Mg(2+). Residues 152–153 (GG), Asn-180, Tyr-288, and Glu-372 contribute to the thiamine diphosphate site. Residue Asn-180 coordinates Mg(2+).

It belongs to the transketolase family. DXPS subfamily. Homodimer. The cofactor is Mg(2+). Requires thiamine diphosphate as cofactor.

The enzyme catalyses D-glyceraldehyde 3-phosphate + pyruvate + H(+) = 1-deoxy-D-xylulose 5-phosphate + CO2. It functions in the pathway metabolic intermediate biosynthesis; 1-deoxy-D-xylulose 5-phosphate biosynthesis; 1-deoxy-D-xylulose 5-phosphate from D-glyceraldehyde 3-phosphate and pyruvate: step 1/1. Functionally, catalyzes the acyloin condensation reaction between C atoms 2 and 3 of pyruvate and glyceraldehyde 3-phosphate to yield 1-deoxy-D-xylulose-5-phosphate (DXP). This is 1-deoxy-D-xylulose-5-phosphate synthase from Nitrosococcus oceani (strain ATCC 19707 / BCRC 17464 / JCM 30415 / NCIMB 11848 / C-107).